The following is a 448-amino-acid chain: Ribosomal protein uS12 methylthiotransferase RimO (448 aa).

One can recognise an MTTase N-terminal domain in the interval 10–120; that stretch reads PNIGFVSLGC…VMEHVHKYVP (111 aa). Positions 19, 55, 84, 152, 156, and 159 each coordinate [4Fe-4S] cluster. Residues 138 to 379 form the Radical SAM core domain; that stretch reads LTPKHYAYLK…MELQQQISAQ (242 aa). The TRAM domain maps to 382 to 448; the sequence is QQKIGKTLPV…ADEYDLWGTC (67 aa).

Belongs to the methylthiotransferase family. RimO subfamily. Requires [4Fe-4S] cluster as cofactor.

It is found in the cytoplasm. The catalysed reaction is L-aspartate(89)-[ribosomal protein uS12]-hydrogen + (sulfur carrier)-SH + AH2 + 2 S-adenosyl-L-methionine = 3-methylsulfanyl-L-aspartate(89)-[ribosomal protein uS12]-hydrogen + (sulfur carrier)-H + 5'-deoxyadenosine + L-methionine + A + S-adenosyl-L-homocysteine + 2 H(+). In terms of biological role, catalyzes the methylthiolation of an aspartic acid residue of ribosomal protein uS12. The chain is Ribosomal protein uS12 methylthiotransferase RimO from Mannheimia succiniciproducens (strain KCTC 0769BP / MBEL55E).